A 410-amino-acid chain; its full sequence is Cysteine desulfurase IscS (410 aa).

Residues 80–81, N160, Q188, and 208–210 each bind pyridoxal 5'-phosphate; these read AT and SGH. An N6-(pyridoxal phosphate)lysine modification is found at K211. T248 contacts pyridoxal 5'-phosphate. Residue C334 is the Cysteine persulfide intermediate of the active site. C334 contributes to the [2Fe-2S] cluster binding site.

This sequence belongs to the class-V pyridoxal-phosphate-dependent aminotransferase family. NifS/IscS subfamily. As to quaternary structure, homodimer. Forms a heterotetramer with IscU, interacts with other sulfur acceptors. It depends on pyridoxal 5'-phosphate as a cofactor.

It localises to the cytoplasm. It catalyses the reaction (sulfur carrier)-H + L-cysteine = (sulfur carrier)-SH + L-alanine. It participates in cofactor biosynthesis; iron-sulfur cluster biosynthesis. Master enzyme that delivers sulfur to a number of partners involved in Fe-S cluster assembly, tRNA modification or cofactor biosynthesis. Catalyzes the removal of elemental sulfur atoms from cysteine to produce alanine. Functions as a sulfur delivery protein for Fe-S cluster synthesis onto IscU, an Fe-S scaffold assembly protein, as well as other S acceptor proteins. This Rickettsia africae (strain ESF-5) protein is Cysteine desulfurase IscS.